The following is a 148-amino-acid chain: Large ribosomal subunit protein uL15 (148 aa).

The span at Met1–Pro12 shows a compositional bias: basic and acidic residues. A disordered region spans residues Met1 to Asn45.

It belongs to the universal ribosomal protein uL15 family. As to quaternary structure, part of the 50S ribosomal subunit.

Its function is as follows. Binds to the 23S rRNA. This Corynebacterium urealyticum (strain ATCC 43042 / DSM 7109) protein is Large ribosomal subunit protein uL15.